Here is a 219-residue protein sequence, read N- to C-terminus: GTP-binding nuclear protein GSP1/CNR1 (219 aa).

Ser-2 is subject to N-acetylserine. Phosphoserine is present on Ser-2. A Small GTPase Ran-type domain is found at 9 to 173; it reads EVPTFKLVLV…LWLARKLAGN (165 aa). 20 to 27 provides a ligand contact to GTP; sequence DGGTGKTT. Positions 39-47 are switch-I; sequence KKYIATIGV. GTP is bound by residues Gly-70, 124-127, and 152-154; these read NKVD and SAK. Positions 70-86 are switch-II; sequence GQEKFGGLRDGYYINAQ.

This sequence belongs to the small GTPase superfamily. Ran family. In terms of assembly, found in a nuclear export complex with RanGTP, exportin and pre-miRNA. Forms a complex with YRB1. Interacts with BUD5, CEX1, RRP12, SRM1, and DIS3/RRP44.

Its subcellular location is the nucleus. GTP-binding protein involved in nucleocytoplasmic transport. Required for the import of protein into the nucleus and also for RNA export. Essential for cell viability. By analogy with Ras, Ran may be activated when GTP is exchanged for bound GDP by RCC1 and inactivated when GTP is hydrolyzed by Ran upon activation by RanGAP1. The protein is GTP-binding nuclear protein GSP1/CNR1 (GSP1) of Saccharomyces cerevisiae (strain ATCC 204508 / S288c) (Baker's yeast).